The chain runs to 179 residues: Coatomer subunit zeta-2 (179 aa).

It belongs to the adaptor complexes small subunit family. Oligomeric complex that consists of at least the alpha, beta, beta', gamma, delta, epsilon and zeta subunits.

Its subcellular location is the cytoplasm. The protein resides in the golgi apparatus membrane. The protein localises to the cytoplasmic vesicle. It localises to the COPI-coated vesicle membrane. Its function is as follows. The coatomer is a cytosolic protein complex that binds to dilysine motifs and reversibly associates with Golgi non-clathrin-coated vesicles, which further mediate biosynthetic protein transport from the ER, via the Golgi up to the trans Golgi network. Coatomer complex is required for budding from Golgi membranes, and is essential for the retrograde Golgi-to-ER transport of dilysine-tagged proteins. The zeta subunit may be involved in regulating the coat assembly and, hence, the rate of biosynthetic protein transport due to its association-dissociation properties with the coatomer complex. In Arabidopsis thaliana (Mouse-ear cress), this protein is Coatomer subunit zeta-2.